A 424-amino-acid chain; its full sequence is Imidazolonepropionase (424 aa).

Fe(3+) is bound by residues H84 and H86. Residues H84 and H86 each coordinate Zn(2+). 4-imidazolone-5-propanoate contacts are provided by R93, Y156, and H189. Position 156 (Y156) interacts with N-formimidoyl-L-glutamate. H254 serves as a coordination point for Fe(3+). H254 provides a ligand contact to Zn(2+). E257 lines the 4-imidazolone-5-propanoate pocket. D328 contacts Fe(3+). Zn(2+) is bound at residue D328. Positions 330 and 332 each coordinate N-formimidoyl-L-glutamate. S333 is a 4-imidazolone-5-propanoate binding site.

Belongs to the metallo-dependent hydrolases superfamily. HutI family. It depends on Zn(2+) as a cofactor. Requires Fe(3+) as cofactor.

The protein resides in the cytoplasm. The catalysed reaction is 4-imidazolone-5-propanoate + H2O = N-formimidoyl-L-glutamate. Its pathway is amino-acid degradation; L-histidine degradation into L-glutamate; N-formimidoyl-L-glutamate from L-histidine: step 3/3. Catalyzes the hydrolytic cleavage of the carbon-nitrogen bond in imidazolone-5-propanoate to yield N-formimidoyl-L-glutamate. It is the third step in the universal histidine degradation pathway. This chain is Imidazolonepropionase, found in Geobacillus kaustophilus (strain HTA426).